The chain runs to 189 residues: UPF0301 protein CCA_00630 (189 aa).

Belongs to the UPF0301 (AlgH) family.

The chain is UPF0301 protein CCA_00630 from Chlamydia caviae (strain ATCC VR-813 / DSM 19441 / 03DC25 / GPIC) (Chlamydophila caviae).